Reading from the N-terminus, the 165-residue chain is NADH-ubiquinone oxidoreductase chain 6 (165 aa).

Transmembrane regions (helical) follow at residues 1–21 (MVVY…FYSL), 47–67 (SFVP…VFPY), 83–103 (GEVV…FDNF), and 130–150 (GVLV…ALII).

Belongs to the complex I subunit 6 family.

It localises to the mitochondrion membrane. The catalysed reaction is a ubiquinone + NADH + 5 H(+)(in) = a ubiquinol + NAD(+) + 4 H(+)(out). Functionally, core subunit of the mitochondrial membrane respiratory chain NADH dehydrogenase (Complex I) that is believed to belong to the minimal assembly required for catalysis. Complex I functions in the transfer of electrons from NADH to the respiratory chain. The immediate electron acceptor for the enzyme is believed to be ubiquinone. The chain is NADH-ubiquinone oxidoreductase chain 6 (ND6) from Strongylocentrotus purpuratus (Purple sea urchin).